The following is a 396-amino-acid chain: Elongation factor Tu (396 aa).

A tr-type G domain is found at 10-205 (KPHVNIGTIG…ACDDSIPDPE (196 aa)). The segment at 19 to 26 (GHVDHGKT) is G1. A GTP-binding site is contributed by 19–26 (GHVDHGKT). Position 26 (threonine 26) interacts with Mg(2+). Positions 62 to 66 (GITIN) are G2. Positions 83–86 (DAPG) are G3. GTP-binding positions include 83–87 (DAPGH) and 138–141 (NKCD). The tract at residues 138–141 (NKCD) is G4. Residues 175–177 (SAL) form a G5 region.

The protein belongs to the TRAFAC class translation factor GTPase superfamily. Classic translation factor GTPase family. EF-Tu/EF-1A subfamily. In terms of assembly, monomer.

It localises to the cytoplasm. It catalyses the reaction GTP + H2O = GDP + phosphate + H(+). Its function is as follows. GTP hydrolase that promotes the GTP-dependent binding of aminoacyl-tRNA to the A-site of ribosomes during protein biosynthesis. The protein is Elongation factor Tu of Corynebacterium aurimucosum (strain ATCC 700975 / DSM 44827 / CIP 107346 / CN-1) (Corynebacterium nigricans).